The following is a 360-amino-acid chain: Peptide chain release factor 1 (360 aa).

Gln237 is modified (N5-methylglutamine).

The protein belongs to the prokaryotic/mitochondrial release factor family. In terms of processing, methylated by PrmC. Methylation increases the termination efficiency of RF1.

The protein localises to the cytoplasm. Peptide chain release factor 1 directs the termination of translation in response to the peptide chain termination codons UAG and UAA. The sequence is that of Peptide chain release factor 1 from Pseudomonas aeruginosa (strain LESB58).